A 281-amino-acid chain; its full sequence is RNA polymerase sigma factor RpoH (281 aa).

The segment at leucine 52–arginine 121 is sigma-70 factor domain-2. An Interaction with polymerase core subunit RpoC motif is present at residues aspartate 76 to glutamine 79. Positions alanine 226–serine 277 are sigma-70 factor domain-4. The H-T-H motif DNA-binding region spans leucine 250–threonine 269.

Belongs to the sigma-70 factor family. RpoH subfamily. In terms of assembly, interacts with the RNA polymerase core enzyme.

It is found in the cytoplasm. Functionally, sigma factors are initiation factors that promote the attachment of RNA polymerase to specific initiation sites and are then released. This sigma factor is involved in regulation of expression of heat shock genes. The chain is RNA polymerase sigma factor RpoH from Haemophilus influenzae (strain ATCC 51907 / DSM 11121 / KW20 / Rd).